Reading from the N-terminus, the 248-residue chain is Tetraspanin-18 (248 aa).

Residues 1–13 (MEGDCLSCMKYLM) are Cytoplasmic-facing. A helical membrane pass occupies residues 14 to 34 (FVFNFFIFLGGACLLAIGIWV). Residues 35–49 (MVDPTGFREIVAANP) lie on the Extracellular side of the membrane. Residues 50–70 (LLLTGAYILLAMGGLLFLLGF) traverse the membrane as a helical segment. Over 71–83 (LGCCGAVRENKCL) the chain is Cytoplasmic. Residues 84 to 104 (LLFFFLFILIIFLAELSAAIL) traverse the membrane as a helical segment. Topologically, residues 105 to 223 (AFIFRENLTR…TFETYVYLAG (119 aa)) are extracellular. N-linked (GlcNAc...) asparagine glycosylation is found at Asn-111 and Asn-129. A helical membrane pass occupies residues 224–244 (ALAIGVLAIELFAMIFAMCLF). Over 245–248 (RGIQ) the chain is Cytoplasmic.

It belongs to the tetraspanin (TM4SF) family. In terms of assembly, interacts with ORAI1; this interaction regulates ORAI1 exit from the endoplasmic (ER), and/or Golgi, and trafficking to the cell surface. As to expression, highly expressed in primary endothelial cells. Expressed in the embryo heart. Weakly expressed the embryo skeletal muscle.

Its subcellular location is the membrane. Plays a role in the cell surface localization of ORAI1 and may participate in the regulation of Ca(2+) signaling and the VWF release in response to inflammatory stimuli. The chain is Tetraspanin-18 from Homo sapiens (Human).